Reading from the N-terminus, the 300-residue chain is Arrestin domain-containing protein 4 (300 aa).

2 consecutive short sequence motifs (PPxY motif) follow at residues proline 231–tyrosine 234 and proline 276–tyrosine 279.

The protein belongs to the arrestin family. As to quaternary structure, interacts with ADRB2. Interacts (via PPxY motifs) with ITCH, NEDD4L and WWP2. Interacts with AVPR2. Identified in a complex containing at least ARRDC4, AVPR2 and HGS. Interacts with SLC11A2; controls the incorporation of SLC11A2 into extracellular vesicles through an ubiquitination-dependent mechanism. Interacts with TRIM65.

It localises to the early endosome. Its subcellular location is the cell membrane. The protein localises to the cytoplasmic vesicle. Functionally, functions as an adapter recruiting ubiquitin-protein ligases to their specific substrates. Plays a role in endocytosis of activated G protein-coupled receptors (GPCRs) Through an ubiquitination-dependent mechanism also plays a role in the incorporation of SLC11A2 into extracellular vesicles. May play a role in glucose uptake. Participates in innate immune response by promoting IFIH1/MDA5 activation through interaction with TRIM65. This is Arrestin domain-containing protein 4 (Arrdc4) from Rattus norvegicus (Rat).